The sequence spans 171 residues: Viral CASP8 and FADD-like apoptosis regulator (171 aa).

2 DED domains span residues 1–74 (MSHY…RIFG) and 92–171 (PFRC…NLQV).

In terms of assembly, associates with the death-inducing signaling complex (DISC) formed by TNFRSF6, FADD and caspase-8. Interacts with FADD.

In terms of biological role, inhibits TNFRSF1A, TNFRSF6, TNFRSF10 and TNFRSF12 induced apoptosis. May interfere with caspase-8 recruitment and activation at the death-inducing signaling complex (DISC). May lead to higher virus production and contribute to virus persistence and oncogenicity. This is Viral CASP8 and FADD-like apoptosis regulator from Equus caballus (Horse).